The sequence spans 359 residues: MGDGPNWRSLPEPSRFVGSDPSPPVPRAPGGDTCPVGLAVIDAPWGVRAGPVLFRAPVQGSAKIAVARMLERGEGMTDQRHCYAGVDWASESHHVFLTDGDGRKIGERVFRHGGEGLAEMAAWLMATSGAVEGDEIQVAIEVPHGPVVETLIERGFKVNAINPKQMDRFRDRFTMAGAKDDSRDAEVMASALRTDPRCFRLLAVSDPVVIELREWSRIAEDLSAERNRLTNRMREQLWRYFPALLELENDLGAEWLLDLWDTVPTPDKAARIREATIAKLLKRHRIRRFDAPPCARYIAPAAAQGRRRNDRIRQRPRHYAHCPHPPRQPAAQTGASSAGWPDRQPHRNRAGGAGAEEAA.

2 disordered regions span residues 1 to 31 (MGDG…APGG) and 318 to 359 (HYAH…EEAA).

Belongs to the transposase 9 family.

In Sinorhizobium fredii (strain NBRC 101917 / NGR234), this protein is Putative transposase y4uE.